A 1018-amino-acid chain; its full sequence is Pleckstrin homology domain-containing family M member 2 (1018 aa).

At M1 the chain carries N-acetylmethionine. The interaction with KIF5B stretch occupies residues 1–289; that stretch reads MEPREVKDRI…PDQPDACTEL (289 aa). In terms of domain architecture, RUN spans 36–158; the sequence is RNHDKVLQRL…IRFDLDLDAP (123 aa). Disordered stretches follow at residues 210–367, 407–440, 452–520, 526–545, and 555–583; these read SAIA…SSEL, TWCS…SEGL, ESPS…DSQL, EPLV…EPGT, and DQPS…THPS. Positions 230 to 245 are enriched in low complexity; it reads STASDLTSSKTSTKSP. Residues 258 to 270 are compositionally biased toward polar residues; sequence ETASSDTTPVHTT. The segment covering 294-306 has biased composition (basic residues); that stretch reads VTKKKKIGKKKKT. Polar residues-rich tracts occupy residues 316-325 and 347-367; these read HPTSSQQKCG and VLAS…SSEL. At S423 the chain carries Phosphoserine. Residues 770-872 enclose the PH domain; sequence TITKEGMLHY…WMQHLCQAVS (103 aa).

Interacts with KLC2 (via TPR repeats). Interacts with KIF5B. Interacts with BORCS5. Interacts (via RUN domain) with ARL8B (GTP-bound form); PLEKHM1 and PLEKHM2 compete for interaction with ARL8B. Interacts with ARL8A.

The protein localises to the cytoplasm. The protein resides in the lysosome membrane. Plays a role in lysosomes movement and localization at the cell periphery acting as an effector of ARL8B. Required for ARL8B to exert its effects on lysosome location, recruits kinesin-1 to lysosomes and hence direct their movement toward microtubule plus ends. Binding to ARL8B provides a link from lysosomal membranes to plus-end-directed motility. Critical factor involved in NK cell-mediated cytotoxicity. Drives the polarization of cytolytic granules and microtubule-organizing centers (MTOCs) toward the immune synapse between effector NK lymphocytes and target cells. Required for maintenance of the Golgi apparatus organization. May play a role in membrane tubulation. The chain is Pleckstrin homology domain-containing family M member 2 from Mus musculus (Mouse).